We begin with the raw amino-acid sequence, 264 residues long: NADH-quinone oxidoreductase subunit I 2 (264 aa).

4Fe-4S ferredoxin-type domains are found at residues 57-86 and 98-127; these read GFLEVDSGICTGCQACERACPIGCIQISLE and TQFDIDEAKCMFCGLCVEPCPTGSIQHTRE. [4Fe-4S] cluster contacts are provided by Cys-66, Cys-69, Cys-72, Cys-76, Cys-107, Cys-110, Cys-113, and Cys-117. A disordered region spans residues 183 to 264; sequence APQFLPPEPP…AAPAANPESK (82 aa). The span at 197–264 shows a compositional bias: low complexity; sequence AKPAAKAAPA…AAPAANPESK (68 aa).

Belongs to the complex I 23 kDa subunit family. NDH-1 is composed of 14 different subunits. Subunits NuoA, H, J, K, L, M, N constitute the membrane sector of the complex. It depends on [4Fe-4S] cluster as a cofactor.

It is found in the cell inner membrane. The catalysed reaction is a quinone + NADH + 5 H(+)(in) = a quinol + NAD(+) + 4 H(+)(out). NDH-1 shuttles electrons from NADH, via FMN and iron-sulfur (Fe-S) centers, to quinones in the respiratory chain. The immediate electron acceptor for the enzyme in this species is believed to be ubiquinone. Couples the redox reaction to proton translocation (for every two electrons transferred, four hydrogen ions are translocated across the cytoplasmic membrane), and thus conserves the redox energy in a proton gradient. This chain is NADH-quinone oxidoreductase subunit I 2, found in Anaeromyxobacter dehalogenans (strain 2CP-C).